The primary structure comprises 122 residues: Small ribosomal subunit protein uS8c (122 aa).

This sequence belongs to the universal ribosomal protein uS8 family. As to quaternary structure, part of the 30S ribosomal subunit.

The protein resides in the plastid. Its subcellular location is the chloroplast. In terms of biological role, one of the primary rRNA binding proteins, it binds directly to 16S rRNA central domain where it helps coordinate assembly of the platform of the 30S subunit. This Ostreococcus tauri protein is Small ribosomal subunit protein uS8c (rps8).